The chain runs to 61 residues: Metallothionein-2 (61 aa).

At Met-1 the chain carries N-acetylmethionine. Positions 1–29 are beta; the sequence is MDPNCSCVAGDSCTCAGSCKCKECKCTSC. A divalent metal cation contacts are provided by Cys-5, Cys-7, Cys-13, Cys-15, Cys-19, Cys-21, Cys-24, Cys-26, Cys-29, Cys-33, Cys-34, Cys-36, Cys-37, Cys-41, Cys-44, Cys-48, Cys-50, Cys-57, Cys-59, and Cys-60. The antigenic epitope stretch occupies residues 20–25; sequence KCKECK. The segment at 30-61 is alpha; it reads KKSCCSCCPVGCAKCAQGCICKGASDKCNCCA.

Belongs to the metallothionein superfamily. Type 1 family.

Functionally, metallothioneins have a high content of cysteine residues that bind various heavy metals; these proteins are transcriptionally regulated by both heavy metals and glucocorticoids. This Macaca fascicularis (Crab-eating macaque) protein is Metallothionein-2 (MT2).